Consider the following 136-residue polypeptide: Large ribosomal subunit protein uL16 (136 aa).

Belongs to the universal ribosomal protein uL16 family. As to quaternary structure, part of the 50S ribosomal subunit.

Its function is as follows. Binds 23S rRNA and is also seen to make contacts with the A and possibly P site tRNAs. This is Large ribosomal subunit protein uL16 from Shewanella baltica (strain OS155 / ATCC BAA-1091).